The chain runs to 130 residues: Histone H2A type 3 (130 aa).

Residues 1-22 (MSGRGKQGGKARAKAKSRSSRA) form a disordered region. Ser-2 bears the N-acetylserine mark. The residue at position 2 (Ser-2) is a Phosphoserine; by RPS6KA5. Arg-4 is subject to Citrulline; alternate. The residue at position 4 (Arg-4) is a Symmetric dimethylarginine; by PRMT5; alternate. N6-(2-hydroxyisobutyryl)lysine is present on Lys-6. Residues 7–19 (QGGKARAKAKSRS) show a composition bias toward basic residues. At Lys-10 the chain carries N6-(2-hydroxyisobutyryl)lysine; alternate. N6-(beta-hydroxybutyryl)lysine; alternate occurs at positions 10 and 14. Residue Lys-10 is modified to N6-lactoyllysine; alternate. Lys-10 bears the N6-succinyllysine; alternate mark. Lys-14 participates in a covalent cross-link: Glycyl lysine isopeptide (Lys-Gly) (interchain with G-Cter in ubiquitin); alternate. Residue Lys-16 forms a Glycyl lysine isopeptide (Lys-Gly) (interchain with G-Cter in ubiquitin) linkage. N6-(2-hydroxyisobutyryl)lysine; alternate is present on Lys-37. An N6-(beta-hydroxybutyryl)lysine; alternate modification is found at Lys-37. Lys-37 is subject to N6-crotonyllysine; alternate. Lys-75 and Lys-76 each carry N6-(2-hydroxyisobutyryl)lysine. Lys-96 is modified (N6-(2-hydroxyisobutyryl)lysine; alternate). Residue Lys-96 is modified to N6-(beta-hydroxybutyryl)lysine; alternate. Lys-96 carries the N6-succinyllysine; alternate modification. Lys-96 is subject to N6-glutaryllysine; alternate. Gln-105 carries the post-translational modification N5-methylglutamine. N6-(2-hydroxyisobutyryl)lysine; alternate is present on Lys-119. Lys-119 carries the N6-(beta-hydroxybutyryl)lysine; alternate modification. Residues Lys-119 and Lys-120 each carry the N6-crotonyllysine; alternate modification. Residues Lys-119 and Lys-120 each carry the N6-glutaryllysine; alternate modification. A Glycyl lysine isopeptide (Lys-Gly) (interchain with G-Cter in ubiquitin); alternate cross-link involves residue Lys-120. At Thr-121 the chain carries Phosphothreonine; by DCAF1. N6-crotonyllysine; alternate is present on Lys-126. Lys-126 carries the N6-glutaryllysine; alternate modification.

The protein belongs to the histone H2A family. In terms of assembly, the nucleosome is a histone octamer containing two molecules each of H2A, H2B, H3 and H4 assembled in one H3-H4 heterotetramer and two H2A-H2B heterodimers. The octamer wraps approximately 147 bp of DNA. Deiminated on Arg-4 in granulocytes upon calcium entry. Post-translationally, monoubiquitination of Lys-120 (H2AK119Ub) by RING1, TRIM37 and RNF2/RING2 complex gives a specific tag for epigenetic transcriptional repression and participates in X chromosome inactivation of female mammals. It is involved in the initiation of both imprinted and random X inactivation. Ubiquitinated H2A is enriched in inactive X chromosome chromatin. Ubiquitination of H2A functions downstream of methylation of 'Lys-27' of histone H3 (H3K27me). H2AK119Ub by RNF2/RING2 can also be induced by ultraviolet and may be involved in DNA repair. Monoubiquitination of Lys-120 (H2AK119Ub) by TRIM37 may promote transformation of cells in a number of breast cancers. Following DNA double-strand breaks (DSBs), it is ubiquitinated through 'Lys-63' linkage of ubiquitin moieties by the E2 ligase UBE2N and the E3 ligases RNF8 and RNF168, leading to the recruitment of repair proteins to sites of DNA damage. Ubiquitination at Lys-14 and Lys-16 (H2AK13Ub and H2AK15Ub, respectively) in response to DNA damage is initiated by RNF168 that mediates monoubiquitination at these 2 sites, and 'Lys-63'-linked ubiquitin are then conjugated to monoubiquitin; RNF8 is able to extend 'Lys-63'-linked ubiquitin chains in vitro. Deubiquitinated by USP51 at Lys-14 and Lys-16 (H2AK13Ub and H2AK15Ub, respectively) after damaged DNA is repaired. H2AK119Ub and ionizing radiation-induced 'Lys-63'-linked ubiquitination (H2AK13Ub and H2AK15Ub) are distinct events. In terms of processing, phosphorylation on Ser-2 (H2AS1ph) is enhanced during mitosis. Phosphorylation on Ser-2 by RPS6KA5/MSK1 directly represses transcription. Acetylation of H3 inhibits Ser-2 phosphorylation by RPS6KA5/MSK1. Phosphorylation at Thr-121 (H2AT120ph) by DCAF1 is present in the regulatory region of many tumor suppresor genes and down-regulates their transcription. Glutamine methylation at Gln-105 (H2AQ104me) by FBL is specifically dedicated to polymerase I. It is present at 35S ribosomal DNA locus and impairs binding of the FACT complex. Post-translationally, symmetric dimethylation on Arg-4 by the PRDM1/PRMT5 complex may play a crucial role in the germ-cell lineage. In terms of processing, crotonylation (Kcr) is specifically present in male germ cells and marks testis-specific genes in post-meiotic cells, including X-linked genes that escape sex chromosome inactivation in haploid cells. Crotonylation marks active promoters and enhancers and confers resistance to transcriptional repressors. It is also associated with post-meiotically activated genes on autosomes. Lactylated in macrophages by EP300/P300 by using lactoyl-CoA directly derived from endogenous or exogenous lactate, leading to stimulates gene transcription.

It is found in the nucleus. The protein localises to the chromosome. Its function is as follows. Core component of nucleosome. Nucleosomes wrap and compact DNA into chromatin, limiting DNA accessibility to the cellular machineries which require DNA as a template. Histones thereby play a central role in transcription regulation, DNA repair, DNA replication and chromosomal stability. DNA accessibility is regulated via a complex set of post-translational modifications of histones, also called histone code, and nucleosome remodeling. The polypeptide is Histone H2A type 3 (Homo sapiens (Human)).